A 164-amino-acid chain; its full sequence is Lipoprotein signal peptidase (164 aa).

The next 3 membrane-spanning stretches (helical) occupy residues 12-32 (WLWL…LILQ), 70-90 (WFFA…MYRS), and 102-122 (ALII…GFVV). Residues D123 and D141 contribute to the active site. Residues 137 to 157 (FNLADTAICVGAALIVLEGFL) traverse the membrane as a helical segment.

The protein belongs to the peptidase A8 family.

The protein localises to the cell inner membrane. It catalyses the reaction Release of signal peptides from bacterial membrane prolipoproteins. Hydrolyzes -Xaa-Yaa-Zaa-|-(S,diacylglyceryl)Cys-, in which Xaa is hydrophobic (preferably Leu), and Yaa (Ala or Ser) and Zaa (Gly or Ala) have small, neutral side chains.. It functions in the pathway protein modification; lipoprotein biosynthesis (signal peptide cleavage). In terms of biological role, this protein specifically catalyzes the removal of signal peptides from prolipoproteins. This chain is Lipoprotein signal peptidase, found in Shigella flexneri.